A 610-amino-acid polypeptide reads, in one-letter code: Scarecrow-like protein 11 (610 aa).

3 disordered regions span residues N32 to V54, Q98 to K159, and Q186 to N220. Composition is skewed to low complexity over residues S41 to P52 and Q99 to D119. Polar residues-rich tracts occupy residues P123–E137 and G209–N220. In terms of domain architecture, GRAS spans K215–K598. A leucine repeat I (LRI) region spans residues V222–P283. The tract at residues Y302 to G367 is VHIID. The VHIID motif lies at L333–D337. The segment at E383 to E415 is leucine repeat II (LRII). The segment at T424 to S520 is PFYRE. Positions S523–K598 are SAW.

This sequence belongs to the GRAS family. As to expression, highly expressed in roots and at lower levels in leaves and sepals. Expressed in siliques.

The protein localises to the nucleus. In terms of biological role, probable transcription factor involved in plant development. In Arabidopsis thaliana (Mouse-ear cress), this protein is Scarecrow-like protein 11 (SCL11).